Here is a 414-residue protein sequence, read N- to C-terminus: Serine hydroxymethyltransferase (414 aa).

(6S)-5,6,7,8-tetrahydrofolate-binding positions include L116 and 120–122; that span reads GHL. K224 carries the post-translational modification N6-(pyridoxal phosphate)lysine. (6S)-5,6,7,8-tetrahydrofolate is bound by residues E240 and 348-350; that span reads SPF.

Belongs to the SHMT family. As to quaternary structure, homodimer. Requires pyridoxal 5'-phosphate as cofactor.

It localises to the cytoplasm. It catalyses the reaction (6R)-5,10-methylene-5,6,7,8-tetrahydrofolate + glycine + H2O = (6S)-5,6,7,8-tetrahydrofolate + L-serine. The protein operates within one-carbon metabolism; tetrahydrofolate interconversion. Its pathway is amino-acid biosynthesis; glycine biosynthesis; glycine from L-serine: step 1/1. Its function is as follows. Catalyzes the reversible interconversion of serine and glycine with tetrahydrofolate (THF) serving as the one-carbon carrier. This reaction serves as the major source of one-carbon groups required for the biosynthesis of purines, thymidylate, methionine, and other important biomolecules. Also exhibits THF-independent aldolase activity toward beta-hydroxyamino acids, producing glycine and aldehydes, via a retro-aldol mechanism. The protein is Serine hydroxymethyltransferase of Campylobacter fetus subsp. fetus (strain 82-40).